The chain runs to 129 residues: Histone H3-like centromeric protein A (129 aa).

Residues 1–14 (MGPRRKPRTPRRRP) show a composition bias toward basic residues. Residues 1–30 (MGPRRKPRTPRRRPSSPVPGPSRRSSRPGK) are disordered. Position 2 is a n,N,N-trimethylglycine (Gly-2). 3 positions are modified to phosphoserine: Ser-16, Ser-22, and Ser-57. Positions 30–129 (KRRKFLWLKE…RIRGIEGGLG (100 aa)) are H3-like. The tract at residues 64–105 (CGKFTRGVDLCWQAQALLALQEAAEAFLVHLFEDAYLLTLHA) is CATD.

This sequence belongs to the histone H3 family. Component of centromeric nucleosomes, where DNA is wrapped around a histone octamer core. The octamer contains two molecules each of H2A, H2B, CENPA and H4 assembled in one CENPA-H4 heterotetramer and two H2A-H2B heterodimers. CENPA modulates the DNA-binding characteristics of nucleosomes so that protruding DNA ends have higher flexibility than in nucleosomes containing conventional histone H3. Inhibits binding of histone H1 to nucleosomes, since histone H1 binds preferentially to rigid DNA linkers that protrude from nucleosomes. Nucleosomes containing CENPA also contain histone H2A variants such as MACROH2A and H2A.Z/H2AZ1. The CENPA-H4 heterotetramer is more compact and structurally more rigid than corresponding H3-H4 heterotetramers. Can assemble into nucleosomes that contain both CENPA and histone H3.3; these nucleosomes interact with a single CENPC chain. Heterotrimer composed of HJURP, CENPA and histone H4, where HJURP interacts with the dimer formed by CENPA and histone H4 and prevents tetramerization of CENPA and H4. Component of the CENPA-NAC complex, at least composed of CENPA, CENPC, CENPH, CENPM, CENPN, CENPT and CENPU. Interacts (via CATD domain) with HJURP; the interaction is direct and is required for its localization to centromeres. Interacts with CENPC, CENPN and CENPT; interaction is direct. Part of a centromere complex consisting of CENPA, CENPT and CENPW. Identified in centromere complexes containing histones H2A, H2B and H4, and at least CENPA, CENPB, CENPC, CENPT, CENPN, HJURP, SUPT16H, SSRP1 and RSF1. Can self-associate. The CENPA-H4 heterotetramer can bind DNA by itself (in vitro). Interacts with CDK1, PPP1CA and RBBP7. In terms of processing, trimethylated by NTMT1 at the N-terminal glycine after cleavage of Met-1. Methylation is low before incorporation into nucleosomes and increases with cell cycle progression, with the highest levels in mitotic nucleosomes. Phosphorylated by CDK1 at Ser-57 during early mitosis; this abolishes association with chromatin and centromeres, prevents interaction with HJURP and thereby prevents premature assembly of CENPA into centromeres. Dephosphorylated at Ser-57 by PPP1CA during late mitosis. Post-translationally, poly-ADP-ribosylated by PARP1.

The protein localises to the nucleus. It localises to the chromosome. The protein resides in the centromere. Histone H3-like nucleosomal protein that is specifically found in centromeric nucleosomes. Replaces conventional H3 in the nucleosome core of centromeric chromatin that serves as an assembly site for the inner kinetochore. The presence of CENPA subtly modifies the nucleosome structure and the way DNA is wrapped around the nucleosome and gives rise to protruding DNA ends that are less well-ordered and rigid compared to nucleosomes containing histone H3. May serve as an epigenetic mark that propagates centromere identity through replication and cell division. Required for recruitment and assembly of kinetochore proteins, and as a consequence required for progress through mitosis, chromosome segregation and cytokinesis. The sequence is that of Histone H3-like centromeric protein A (CENPA) from Cricetulus griseus (Chinese hamster).